A 321-amino-acid polypeptide reads, in one-letter code: Probable pectate lyase A (321 aa).

The signal sequence occupies residues 1 to 18 (MKFVATLIACGLSGLALA). Asn93 carries an N-linked (GlcNAc...) asparagine glycan. Ca(2+)-binding residues include Asp134, Asp163, and Asp167. Residue Arg220 is part of the active site. A glycan (N-linked (GlcNAc...) asparagine) is linked at Asn238.

Belongs to the polysaccharide lyase 1 family. The cofactor is Ca(2+).

It is found in the secreted. The enzyme catalyses Eliminative cleavage of (1-&gt;4)-alpha-D-galacturonan to give oligosaccharides with 4-deoxy-alpha-D-galact-4-enuronosyl groups at their non-reducing ends.. Its function is as follows. Pectinolytic enzyme consist of four classes of enzymes: pectin lyase, polygalacturonase, pectin methylesterase and rhamnogalacturonase. Among pectinolytic enzymes, pectin lyase is the most important in depolymerization of pectin, since it cleaves internal glycosidic bonds of highly methylated pectins. Favors pectate, the anion, over pectin, the methyl ester. This Neosartorya fischeri (strain ATCC 1020 / DSM 3700 / CBS 544.65 / FGSC A1164 / JCM 1740 / NRRL 181 / WB 181) (Aspergillus fischerianus) protein is Probable pectate lyase A (plyA).